The chain runs to 459 residues: Siroheme synthase 2 (459 aa).

Positions Met1–Thr204 are precorrin-2 dehydrogenase /sirohydrochlorin ferrochelatase. NAD(+) contacts are provided by residues Glu22–Ile23 and Leu43–Asp44. A Phosphoserine modification is found at Ser128. The segment at Gly216–Ala459 is uroporphyrinogen-III C-methyltransferase. Pro225 is a binding site for S-adenosyl-L-methionine. The active-site Proton acceptor is Asp248. Lys270 serves as the catalytic Proton donor. S-adenosyl-L-methionine is bound by residues Gly301–Asp303, Ile306, Thr331–Ala332, Met382, and Gly411.

It in the N-terminal section; belongs to the precorrin-2 dehydrogenase / sirohydrochlorin ferrochelatase family. In the C-terminal section; belongs to the precorrin methyltransferase family.

The catalysed reaction is uroporphyrinogen III + 2 S-adenosyl-L-methionine = precorrin-2 + 2 S-adenosyl-L-homocysteine + H(+). It carries out the reaction precorrin-2 + NAD(+) = sirohydrochlorin + NADH + 2 H(+). It catalyses the reaction siroheme + 2 H(+) = sirohydrochlorin + Fe(2+). The protein operates within cofactor biosynthesis; adenosylcobalamin biosynthesis; precorrin-2 from uroporphyrinogen III: step 1/1. It participates in cofactor biosynthesis; adenosylcobalamin biosynthesis; sirohydrochlorin from precorrin-2: step 1/1. Its pathway is porphyrin-containing compound metabolism; siroheme biosynthesis; precorrin-2 from uroporphyrinogen III: step 1/1. It functions in the pathway porphyrin-containing compound metabolism; siroheme biosynthesis; siroheme from sirohydrochlorin: step 1/1. The protein operates within porphyrin-containing compound metabolism; siroheme biosynthesis; sirohydrochlorin from precorrin-2: step 1/1. In terms of biological role, multifunctional enzyme that catalyzes the SAM-dependent methylations of uroporphyrinogen III at position C-2 and C-7 to form precorrin-2 via precorrin-1. Then it catalyzes the NAD-dependent ring dehydrogenation of precorrin-2 to yield sirohydrochlorin. Finally, it catalyzes the ferrochelation of sirohydrochlorin to yield siroheme. In Pectobacterium atrosepticum (strain SCRI 1043 / ATCC BAA-672) (Erwinia carotovora subsp. atroseptica), this protein is Siroheme synthase 2.